The chain runs to 156 residues: Ribosomal RNA large subunit methyltransferase H (156 aa).

S-adenosyl-L-methionine contacts are provided by residues leucine 73, glycine 104, and 123–128 (LSALTL).

The protein belongs to the RNA methyltransferase RlmH family. As to quaternary structure, homodimer.

The protein localises to the cytoplasm. It catalyses the reaction pseudouridine(1915) in 23S rRNA + S-adenosyl-L-methionine = N(3)-methylpseudouridine(1915) in 23S rRNA + S-adenosyl-L-homocysteine + H(+). Its function is as follows. Specifically methylates the pseudouridine at position 1915 (m3Psi1915) in 23S rRNA. This chain is Ribosomal RNA large subunit methyltransferase H, found in Shewanella woodyi (strain ATCC 51908 / MS32).